The sequence spans 562 residues: Urease subunit alpha (562 aa).

Positions 131 to 562 (GGMDCHIHFI…LPMAQRYFLF (432 aa)) constitute a Urease domain. Ni(2+)-binding residues include His136, His138, and Lys219. The residue at position 219 (Lys219) is an N6-carboxylysine. His221 contributes to the substrate binding site. The Ni(2+) site is built by His248 and His274. His322 functions as the Proton donor in the catalytic mechanism. Ni(2+) is bound at residue Asp362.

The protein belongs to the metallo-dependent hydrolases superfamily. Urease alpha subunit family. In terms of assembly, heterotrimer of UreA (gamma), UreB (beta) and UreC (alpha) subunits. Three heterotrimers associate to form the active enzyme. Ni cation serves as cofactor. Post-translationally, carboxylation allows a single lysine to coordinate two nickel ions.

Its subcellular location is the cytoplasm. It carries out the reaction urea + 2 H2O + H(+) = hydrogencarbonate + 2 NH4(+). The protein operates within nitrogen metabolism; urea degradation; CO(2) and NH(3) from urea (urease route): step 1/1. The protein is Urease subunit alpha of Paracoccus denitrificans (strain Pd 1222).